A 305-amino-acid polypeptide reads, in one-letter code: Sulfate adenylyltransferase subunit 2 (305 aa).

This sequence belongs to the PAPS reductase family. CysD subfamily. Heterodimer composed of CysD, the smaller subunit, and CysN.

The catalysed reaction is sulfate + ATP + H(+) = adenosine 5'-phosphosulfate + diphosphate. Its pathway is sulfur metabolism; hydrogen sulfide biosynthesis; sulfite from sulfate: step 1/3. Functionally, with CysN forms the ATP sulfurylase (ATPS) that catalyzes the adenylation of sulfate producing adenosine 5'-phosphosulfate (APS) and diphosphate, the first enzymatic step in sulfur assimilation pathway. APS synthesis involves the formation of a high-energy phosphoric-sulfuric acid anhydride bond driven by GTP hydrolysis by CysN coupled to ATP hydrolysis by CysD. This is Sulfate adenylyltransferase subunit 2 from Stutzerimonas stutzeri (strain A1501) (Pseudomonas stutzeri).